The chain runs to 89 residues: Sec-independent protein translocase protein TatA (89 aa).

A helical membrane pass occupies residues methionine 1–glycine 21. The tract at residues alanine 65–valine 89 is disordered. The span at alanine 76 to valine 89 shows a compositional bias: basic and acidic residues.

The protein belongs to the TatA/E family. As to quaternary structure, the Tat system comprises two distinct complexes: a TatABC complex, containing multiple copies of TatA, TatB and TatC subunits, and a separate TatA complex, containing only TatA subunits. Substrates initially bind to the TatABC complex, which probably triggers association of the separate TatA complex to form the active translocon.

Its subcellular location is the cell inner membrane. Part of the twin-arginine translocation (Tat) system that transports large folded proteins containing a characteristic twin-arginine motif in their signal peptide across membranes. TatA could form the protein-conducting channel of the Tat system. In Shigella flexneri, this protein is Sec-independent protein translocase protein TatA.